The chain runs to 343 residues: Anthranilate phosphoribosyltransferase (343 aa).

5-phospho-alpha-D-ribose 1-diphosphate contacts are provided by residues Gly77, Gly80 to Asp81, Thr85, Asn87 to Thr90, Lys105 to Gly113, and Ser117. Anthranilate is bound at residue Gly77. Ser89 is a Mg(2+) binding site. Asn108 lines the anthranilate pocket. Arg163 is an anthranilate binding site. Residues Asp222 and Glu223 each coordinate Mg(2+).

Belongs to the anthranilate phosphoribosyltransferase family. Homodimer. Mg(2+) is required as a cofactor.

The catalysed reaction is N-(5-phospho-beta-D-ribosyl)anthranilate + diphosphate = 5-phospho-alpha-D-ribose 1-diphosphate + anthranilate. The protein operates within amino-acid biosynthesis; L-tryptophan biosynthesis; L-tryptophan from chorismate: step 2/5. In terms of biological role, catalyzes the transfer of the phosphoribosyl group of 5-phosphorylribose-1-pyrophosphate (PRPP) to anthranilate to yield N-(5'-phosphoribosyl)-anthranilate (PRA). The chain is Anthranilate phosphoribosyltransferase from Cenarchaeum symbiosum (strain A).